The chain runs to 443 residues: Na(+)-translocating NADH-quinone reductase subunit A (443 aa).

The protein belongs to the NqrA family. Composed of six subunits; NqrA, NqrB, NqrC, NqrD, NqrE and NqrF.

It carries out the reaction a ubiquinone + n Na(+)(in) + NADH + H(+) = a ubiquinol + n Na(+)(out) + NAD(+). NQR complex catalyzes the reduction of ubiquinone-1 to ubiquinol by two successive reactions, coupled with the transport of Na(+) ions from the cytoplasm to the periplasm. NqrA to NqrE are probably involved in the second step, the conversion of ubisemiquinone to ubiquinol. This Mannheimia succiniciproducens (strain KCTC 0769BP / MBEL55E) protein is Na(+)-translocating NADH-quinone reductase subunit A.